A 1863-amino-acid chain; its full sequence is Breast cancer type 1 susceptibility protein (1863 aa).

Methionine 1 carries the N-acetylmethionine modification. An RING-type zinc finger spans residues 24 to 65 (CPICLELIKEPVSTKCDHIFCKFCMLKLLNQKKGPSQCPLCK). Residue lysine 109 forms a Glycyl lysine isopeptide (Lys-Gly) (interchain with G-Cter in SUMO2) linkage. At serine 114 the chain carries Phosphoserine. The interval 230–270 (ETDVTNTEHHQPSNNDLNTTEKRAAERHPEKYQGSSVSNLH) is disordered. Residues 248–260 (TTEKRAAERHPEK) are compositionally biased toward basic and acidic residues. A Glycyl lysine isopeptide (Lys-Gly) (interchain with G-Cter in SUMO2) cross-link involves residue lysine 301. The tract at residues 306 to 338 (NKSKQPGLARSQHNRWAGSKETCNDRRTPSTEK) is disordered. Basic and acidic residues predominate over residues 327–338 (TCNDRRTPSTEK). Residue lysine 339 forms a Glycyl lysine isopeptide (Lys-Gly) (interchain with G-Cter in SUMO2) linkage. Residues serine 395, serine 398, serine 423, and serine 434 each carry the phosphoserine modification. Glycyl lysine isopeptide (Lys-Gly) (interchain with G-Cter in SUMO2) cross-links involve residues lysine 443, lysine 459, and lysine 519. The span at 534-544 (QGTNQTEQNGQ) shows a compositional bias: low complexity. Residues 534-570 (QGTNQTEQNGQVMNITNSGHENKTKGDSIQNEKNPNP) form a disordered region. Phosphoserine is present on serine 551. Glycyl lysine isopeptide (Lys-Gly) (interchain with G-Cter in SUMO2) cross-links involve residues lysine 583 and lysine 654. Residues 654-709 (KYNQMPVRHSRNLQLMEGKEPATGAKKSNKPNEQTSKRHDSDTFPELKLTNAPGSF) are disordered. 3 positions are modified to phosphoserine: serine 694, serine 708, and serine 725. Residues lysine 734 and lysine 739 each participate in a glycyl lysine isopeptide (Lys-Gly) (interchain with G-Cter in SUMO2) cross-link. Phosphoserine is present on residues serine 753 and serine 840. Glycyl lysine isopeptide (Lys-Gly) (interchain with G-Cter in SUMO2) cross-links involve residues lysine 918 and lysine 987. At serine 988 the chain carries Phosphoserine; by CHEK2. A Phosphoserine modification is found at serine 1009. Lysine 1079 is covalently cross-linked (Glycyl lysine isopeptide (Lys-Gly) (interchain with G-Cter in SUMO2)). Serine 1143 carries the post-translational modification Phosphoserine; by ATR; in vitro. The disordered stretch occupies residues 1181–1216 (VQKGELSRSPSPFTHTHLAQGYRRGAKKLESSEENL). Phosphoserine occurs at positions 1189, 1191, 1211, 1217, and 1218. Serine 1280 bears the Phosphoserine; by ATR; in vitro mark. The segment at 1322–1387 (KQMRHQSESQ…VSEDCSGLSS (66 aa)) is disordered. Phosphoserine occurs at positions 1328, 1336, and 1342. The span at 1373-1387 (ESETSVSEDCSGLSS) shows a compositional bias: polar residues. Residue serine 1387 is modified to Phosphoserine; by ATM and ATR. The residue at position 1394 (threonine 1394) is a Phosphothreonine; by ATR; in vitro. The tract at residues 1397–1424 (RDTMQHNLIKLQQEMAELEAVLEQHGSQ) is interaction with PALB2. Phosphoserine; by ATM and ATR is present on serine 1423. The disordered stretch occupies residues 1440 to 1505 (EDLRNPEQST…SSPSKCPSLD (66 aa)). The segment covering 1445 to 1470 (PEQSTSEKAVLTSQKSSEYPISQNPE) has biased composition (polar residues). Phosphoserine; by ATR; in vitro is present on serine 1457. At serine 1524 the chain carries Phosphoserine; by ATM. Residue serine 1542 is modified to Phosphoserine. Residues 1565 to 1596 (ESGISLFSDDPESDPSEDRAPESARVGNIPSS) are disordered. BRCT domains follow at residues 1642 to 1736 (STER…DFEV) and 1756 to 1855 (QDRK…TYLI).

As to quaternary structure, heterodimer with BARD1. Part of the BRCA1-associated genome surveillance complex (BASC), which contains BRCA1, MSH2, MSH6, MLH1, ATM, BLM, PMS2 and the MRE11-RAD50-NBN protein (MRN) complex. This association could be a dynamic process changing throughout the cell cycle and within subnuclear domains. Component of the BRCA1-A complex, at least composed of BRCA1, BARD1, UIMC1/RAP80, ABRAXAS1, BRCC3/BRCC36, BABAM2 and BABAM1/NBA1. Interacts (via the BRCT domains) with ABRAXAS1 (phosphorylated form); this is important for recruitment to sites of DNA damage. Can form a heterotetramer with two molecules of ABRAXAS1 (phosphorylated form). Component of the BRCA1-RBBP8 complex. Interacts (via the BRCT domains) with RBBP8 ('Ser-327' phosphorylated form); the interaction ubiquitinates RBBP8, regulates CHEK1 activation, and involves RBBP8 in BRCA1-dependent G2/M checkpoint control on DNA damage. Associates with RNA polymerase II holoenzyme. Interacts with SMC1A, NELFB, DCLRE1C, CLSPN. Interacts with CHEK1, CHEK2, BAP1, BRCC3, UBXN1 and PCLAF. Interacts (via BRCT domains) with BRIP1 (phosphorylated form). Interacts with FANCD2 (ubiquitinated form). Interacts with H2AX (phosphorylated on 'Ser-140'). Interacts (via the BRCT domains) with ACACA (phosphorylated form); the interaction prevents dephosphorylation of ACACA. Part of a BRCA complex containing BRCA1, BRCA2 and PALB2. Interacts directly with PALB2; the interaction is essential for its function in HRR. Interacts directly with BRCA2; the interaction occurs only in the presence of PALB2 which serves as the bridging protein. Interacts (via the BRCT domains) with LMO4; the interaction represses the transcriptional activity of BRCA1. Interacts (via the BRCT domains) with CCAR2 (via N-terminus); the interaction represses the transcriptional activator activity of BRCA1. Interacts with EXD2. Interacts (via C-terminus) with DHX9; this interaction is direct and links BRCA1 to the RNA polymerase II holoenzyme. Interacts with DNA helicase ZGRF1; the interaction is increased following DNA damage induction. Post-translationally, phosphorylated in response to IR, UV, and various stimuli that cause checkpoint activation, probably by ATM or ATR. Phosphorylation at Ser-988 by CHEK2 regulates mitotic spindle assembly. Phosphorylation by AURKA regulates centrosomal microtubule nucleation. In terms of processing, autoubiquitinated, undergoes 'Lys-6'-linked polyubiquitination. 'Lys-6'-linked polyubiquitination does not promote degradation. As to expression, isoform 1 and isoform 3 are widely expressed. Isoform 3 is reduced or absent in several breast and ovarian cancer cell lines.

The protein localises to the nucleus. It localises to the chromosome. The protein resides in the cytoplasm. The catalysed reaction is S-ubiquitinyl-[E2 ubiquitin-conjugating enzyme]-L-cysteine + [acceptor protein]-L-lysine = [E2 ubiquitin-conjugating enzyme]-L-cysteine + N(6)-ubiquitinyl-[acceptor protein]-L-lysine.. The protein operates within protein modification; protein ubiquitination. The E3 ubiquitin-protein ligase activity is inhibited by phosphorylation by AURKA. Activity is increased by phosphatase treatment. In terms of biological role, E3 ubiquitin-protein ligase that specifically mediates the formation of 'Lys-6'-linked polyubiquitin chains and plays a central role in DNA repair by facilitating cellular responses to DNA damage. It is unclear whether it also mediates the formation of other types of polyubiquitin chains. The BRCA1-BARD1 heterodimer coordinates a diverse range of cellular pathways such as DNA damage repair, ubiquitination and transcriptional regulation to maintain genomic stability. Regulates centrosomal microtubule nucleation. Required for appropriate cell cycle arrests after ionizing irradiation in both the S-phase and the G2 phase of the cell cycle. Required for FANCD2 targeting to sites of DNA damage. Inhibits lipid synthesis by binding to inactive phosphorylated ACACA and preventing its dephosphorylation. Contributes to homologous recombination repair (HRR) via its direct interaction with PALB2, fine-tunes recombinational repair partly through its modulatory role in the PALB2-dependent loading of BRCA2-RAD51 repair machinery at DNA breaks. Component of the BRCA1-RBBP8 complex which regulates CHEK1 activation and controls cell cycle G2/M checkpoints on DNA damage via BRCA1-mediated ubiquitination of RBBP8. Acts as a transcriptional activator. In Homo sapiens (Human), this protein is Breast cancer type 1 susceptibility protein (BRCA1).